The following is a 162-amino-acid chain: Peptide deformylase-like (162 aa).

It belongs to the polypeptide deformylase family.

The sequence is that of Peptide deformylase-like from Staphylococcus epidermidis (strain ATCC 35984 / DSM 28319 / BCRC 17069 / CCUG 31568 / BM 3577 / RP62A).